We begin with the raw amino-acid sequence, 287 residues long: 4-hydroxybenzoate octaprenyltransferase (287 aa).

The next 6 helical transmembrane spans lie at 41–61 (WPLL…GCAM), 89–109 (WEAV…ILPL), 133–153 (FFAI…PMAF), 158–178 (DTVP…SVAY), 202–224 (FGRF…YVWI), and 266–286 (HNNW…LLAG).

Belongs to the UbiA prenyltransferase family. Mg(2+) is required as a cofactor.

The protein resides in the cell inner membrane. It carries out the reaction all-trans-octaprenyl diphosphate + 4-hydroxybenzoate = 4-hydroxy-3-(all-trans-octaprenyl)benzoate + diphosphate. The protein operates within cofactor biosynthesis; ubiquinone biosynthesis. Catalyzes the prenylation of para-hydroxybenzoate (PHB) with an all-trans polyprenyl group. Mediates the second step in the final reaction sequence of ubiquinone-8 (UQ-8) biosynthesis, which is the condensation of the polyisoprenoid side chain with PHB, generating the first membrane-bound Q intermediate 3-octaprenyl-4-hydroxybenzoate. This chain is 4-hydroxybenzoate octaprenyltransferase, found in Burkholderia orbicola (strain MC0-3).